Here is a 311-residue protein sequence, read N- to C-terminus: Aspartate carbamoyltransferase catalytic subunit (311 aa).

Residues Arg-59 and Thr-60 each contribute to the carbamoyl phosphate site. An L-aspartate-binding site is contributed by Lys-87. Residues Arg-109, His-139, and Gln-142 each coordinate carbamoyl phosphate. Positions 172 and 224 each coordinate L-aspartate. Residues Ala-265 and Pro-266 each contribute to the carbamoyl phosphate site.

Belongs to the aspartate/ornithine carbamoyltransferase superfamily. ATCase family. Heterododecamer (2C3:3R2) of six catalytic PyrB chains organized as two trimers (C3), and six regulatory PyrI chains organized as three dimers (R2).

The catalysed reaction is carbamoyl phosphate + L-aspartate = N-carbamoyl-L-aspartate + phosphate + H(+). It participates in pyrimidine metabolism; UMP biosynthesis via de novo pathway; (S)-dihydroorotate from bicarbonate: step 2/3. Its function is as follows. Catalyzes the condensation of carbamoyl phosphate and aspartate to form carbamoyl aspartate and inorganic phosphate, the committed step in the de novo pyrimidine nucleotide biosynthesis pathway. The polypeptide is Aspartate carbamoyltransferase catalytic subunit (Streptococcus equi subsp. equi (strain 4047)).